The sequence spans 298 residues: Protoheme IX farnesyltransferase (298 aa).

Transmembrane regions (helical) follow at residues 26 to 46, 52 to 72, 98 to 118, 120 to 140, 148 to 168, 174 to 194, 214 to 234, 241 to 261, and 278 to 298; these read VVGHIVFTAIIGMFLAVPGVP, FWASLGIGFAAASAAALNHFL, VVGFALVLGIVAMAILIAFVN, LTAFLTFLSLIGYAVIYTVYL, IVIGGAAGAAPPVLGWCAVTG, ALLLFLLIFVWTPPHFWAYAI, IAFTQLHILLYTILLFLAGLM, SGEIYLAAALIFGGIFVYYAI, and YSLVYLVGIFSALLVDHYIVL.

Belongs to the UbiA prenyltransferase family. Protoheme IX farnesyltransferase subfamily.

It localises to the cell inner membrane. The enzyme catalyses heme b + (2E,6E)-farnesyl diphosphate + H2O = Fe(II)-heme o + diphosphate. Its pathway is porphyrin-containing compound metabolism; heme O biosynthesis; heme O from protoheme: step 1/1. Converts heme B (protoheme IX) to heme O by substitution of the vinyl group on carbon 2 of heme B porphyrin ring with a hydroxyethyl farnesyl side group. This chain is Protoheme IX farnesyltransferase, found in Methylococcus capsulatus (strain ATCC 33009 / NCIMB 11132 / Bath).